Here is a 1197-residue protein sequence, read N- to C-terminus: ATP-dependent helicase/nuclease subunit A (1197 aa).

In terms of domain architecture, UvrD-like helicase ATP-binding spans 2–458 (KNWTTEQQAA…IDLAKNFRSR (457 aa)). 23–30 (AAAGSGKT) lines the ATP pocket. The 290-residue stretch at 485–774 (RAALYQGASF…RIMSIHKSKG (290 aa)) folds into the UvrD-like helicase C-terminal domain.

It belongs to the helicase family. AddA subfamily. Heterodimer of AddA and AddB/RexB. Mg(2+) serves as cofactor.

The catalysed reaction is Couples ATP hydrolysis with the unwinding of duplex DNA by translocating in the 3'-5' direction.. It catalyses the reaction ATP + H2O = ADP + phosphate + H(+). Its function is as follows. The heterodimer acts as both an ATP-dependent DNA helicase and an ATP-dependent, dual-direction single-stranded exonuclease. Recognizes the chi site generating a DNA molecule suitable for the initiation of homologous recombination. The AddA nuclease domain is required for chi fragment generation; this subunit has the helicase and 3' -&gt; 5' nuclease activities. This chain is ATP-dependent helicase/nuclease subunit A, found in Alkaliphilus metalliredigens (strain QYMF).